The primary structure comprises 128 residues: Otoraplin (128 aa).

An N-terminal signal peptide occupies residues Met-1–Ala-17. Intrachain disulfides connect Cys-32–Cys-37 and Cys-55–Cys-127. The SH3 domain maps to Tyr-39–Val-110.

The protein belongs to the MIA/OTOR family. Highly expressed in cochlea.

Its subcellular location is the secreted. The polypeptide is Otoraplin (OTOR) (Homo sapiens (Human)).